The primary structure comprises 40 residues: Large ribosomal subunit protein bL36 (40 aa).

It belongs to the bacterial ribosomal protein bL36 family.

This is Large ribosomal subunit protein bL36 from Corynebacterium diphtheriae (strain ATCC 700971 / NCTC 13129 / Biotype gravis).